The primary structure comprises 179 residues: Pyridoxal 5'-phosphate synthase subunit PdxT (179 aa).

48–50 is an L-glutamine binding site; the sequence is GES. Catalysis depends on Cys-79, which acts as the Nucleophile. L-glutamine contacts are provided by residues Arg-101 and 127–128; that span reads IR. Residues His-163 and Glu-165 each act as charge relay system in the active site.

The protein belongs to the glutaminase PdxT/SNO family. In the presence of PdxS, forms a dodecamer of heterodimers. Only shows activity in the heterodimer.

It catalyses the reaction aldehydo-D-ribose 5-phosphate + D-glyceraldehyde 3-phosphate + L-glutamine = pyridoxal 5'-phosphate + L-glutamate + phosphate + 3 H2O + H(+). The enzyme catalyses L-glutamine + H2O = L-glutamate + NH4(+). It participates in cofactor biosynthesis; pyridoxal 5'-phosphate biosynthesis. Its function is as follows. Catalyzes the hydrolysis of glutamine to glutamate and ammonia as part of the biosynthesis of pyridoxal 5'-phosphate. The resulting ammonia molecule is channeled to the active site of PdxS. The sequence is that of Pyridoxal 5'-phosphate synthase subunit PdxT from Francisella tularensis subsp. novicida (strain U112).